Consider the following 236-residue polypeptide: UPF0257 lipoprotein YnfC (236 aa).

The first 16 residues, 1-16, serve as a signal peptide directing secretion; that stretch reads MKKPLLLTLLCMILAG. Residue C17 is the site of N-palmitoyl cysteine attachment. C17 is lipidated: S-diacylglycerol cysteine.

This sequence belongs to the UPF0257 family.

It localises to the cell membrane. The sequence is that of UPF0257 lipoprotein YnfC from Salmonella schwarzengrund (strain CVM19633).